The chain runs to 732 residues: Protein kinase YpkA (732 aa).

In terms of domain architecture, Protein kinase spans 136–408 (VAETDKFAEG…SNEARLHEFL (273 aa)). ATP contacts are provided by residues 142-150 (FAEGESHIS) and Lys-163. The Proton acceptor role is filled by Asp-270.

This sequence belongs to the protein kinase superfamily. Ser/Thr protein kinase family.

The protein resides in the secreted. The catalysed reaction is L-seryl-[protein] + ATP = O-phospho-L-seryl-[protein] + ADP + H(+). It catalyses the reaction L-threonyl-[protein] + ATP = O-phospho-L-threonyl-[protein] + ADP + H(+). Functionally, acts as a virulence determinant. The chain is Protein kinase YpkA (ypkA) from Yersinia pseudotuberculosis serotype I (strain IP32953).